The chain runs to 736 residues: DEAD-box ATP-dependent RNA helicase 21 (736 aa).

The stretch at 14–38 forms a coiled coil; that stretch reads LTREEREKLALERRQAAVTDQRRSA. Residues 25–38 are compositionally biased toward basic and acidic residues; it reads ERRQAAVTDQRRSA. 2 disordered regions span residues 25–178 and 231–263; these read ERRQ…PKKR and KVAA…DKKE. The span at 46 to 58 shows a compositional bias: pro residues; that stretch reads PRPPPPPPPPLSN. 2 stretches are compositionally biased toward basic and acidic residues: residues 64–166 and 231–252; these read SSSH…DAIK and KVAA…GLDD. Positions 137–167 form a coiled coil; the sequence is DRDRERGDREKDRLEKMAEREREKELDAIKE. The Q motif signature appears at 315 to 343; it reads RKWSESKLGTELLRAVEKAGYKEPSPIQM. The 196-residue stretch at 346–541 folds into the Helicase ATP-binding domain; that stretch reads IPLGLQQRDV…RKYLRNPVVV (196 aa). 359–366 lines the ATP pocket; sequence AETGSGKT. A DEAD box motif is present at residues 472-475; it reads DEAD. Positions 568-712 constitute a Helicase C-terminal domain; sequence RLQKILTDLG…PVPPELARHE (145 aa). The tract at residues 704–736 is disordered; the sequence is VPPELARHEASKFKPGSVPDRPPRRNDTVYATH.

The protein belongs to the DEAD box helicase family. DDX23/PRP28 subfamily.

It is found in the cytoplasm. The protein resides in the nucleus. The enzyme catalyses ATP + H2O = ADP + phosphate + H(+). Functionally, ATP-dependent RNA helicase involved in mRNA splicing. May destabilize the U1/5'-splice site duplex to permit an effective competition for the 5'-splice site by the U6 snRNA, resulting in the switch between U1 and U6 at the 5'-splice site. May also act to unwind the U4/U6 base-pairing interaction in the U4/U6/U5 snRNP, facilitating the first covalent step of splicing. This chain is DEAD-box ATP-dependent RNA helicase 21, found in Oryza sativa subsp. japonica (Rice).